A 156-amino-acid polypeptide reads, in one-letter code: Melatonin receptor type 1A (156 aa).

Helical transmembrane passes span 19-39 (LCYV…NLQT), 62-82 (TIAL…FCYL), and 115-135 (FVVF…GLIV).

The protein belongs to the G-protein coupled receptor 1 family. In terms of tissue distribution, at least in the brain, more precisely in the pars tuberalis and the suprachiasmatic nucleus.

It localises to the cell membrane. High affinity receptor for melatonin. Likely to mediate the reproductive and circadian actions of melatonin. The activity of this receptor is mediated by pertussis toxin sensitive G proteins that inhibit adenylate cyclase activity. Possibly involved in sleep induction, by melatonin activation of the potassium channel KCNMA1/BK and the dissociation of G-beta and G-gamma subunits, thereby decreasing synaptic transmission. The polypeptide is Melatonin receptor type 1A (Mtnr1a) (Rattus norvegicus (Rat)).